The primary structure comprises 378 residues: Geraniol dehydrogenase (378 aa).

Residues Cys48, His75, Cys105, Cys108, Cys111, Cys119, and Cys179 each coordinate Zn(2+).

This sequence belongs to the zinc-containing alcohol dehydrogenase family. As to quaternary structure, monomer. Zn(2+) is required as a cofactor.

It carries out the reaction (2E)-geraniol + NAD(+) = (2E)-geranial + NADH + H(+). The catalysed reaction is (2E,6E)-farnesol + NAD(+) = (2E,6E)-farnesal + NADH + H(+). Its function is as follows. Catalyzes the NAD(+)-dependent oxidation of geraniol to geranial, playing an important role in the biosynthesis of neral, an alarm pheromone. Cannot use NADP(+). Also acts as a farnesol dehydrogenase by catalyzing the oxidation of (2E,6E)-farnesol to (2E,6E)-farnesal, with lower activity compared to geraniol dehydrogenase activity. The sequence is that of Geraniol dehydrogenase from Carpoglyphus lactis (Dried fruit mite).